A 450-amino-acid chain; its full sequence is Perilipin-2 (450 aa).

Alanine 2 is modified (N-acetylalanine). Serine 215 carries the post-translational modification Phosphoserine. Tyrosine 232 is modified (phosphotyrosine). The interval 411–450 (ESESAQAPGTTRRPGRWSRKHPKPVPVSNAEGSQPDDSSS) is disordered. Residues 423–433 (RPGRWSRKHPK) are compositionally biased toward basic residues. Residues 440–450 (AEGSQPDDSSS) show a composition bias toward polar residues.

This sequence belongs to the perilipin family. Interacts with IRGC. Post-translationally, acylated; primarily with C14, C16 and C18 fatty acids. In terms of processing, phosphorylation at Tyr-232 by isoform 1 of CHKA (CHKalpha2) promotes dissociation from lipid droplets: dissociation is followed by recruitment of autophagosome machinery to lipid droplets and subsequent lipid droplet lipolysis. Polyubiquitination of Nt-acetylatable A-PLIN2 by MARCHF6 lead to degradation by 26S proteasomes. As to expression, milk lipid globules.

It localises to the membrane. Its subcellular location is the lipid droplet. In terms of biological role, structural component of lipid droplets, which is required for the formation and maintenance of lipid storage droplets. In Bos taurus (Bovine), this protein is Perilipin-2 (PLIN2).